We begin with the raw amino-acid sequence, 383 residues long: UDP-N-acetylglucosamine--N-acetylmuramyl-(pentapeptide) pyrophosphoryl-undecaprenol N-acetylglucosamine transferase (383 aa).

UDP-N-acetyl-alpha-D-glucosamine is bound by residues 10 to 12 (TGG), N124, R165, S190, I245, and Q290. A disordered region spans residues 364–383 (PFGQAREPGQKPARPPDLAS).

It belongs to the glycosyltransferase 28 family. MurG subfamily.

The protein resides in the cell inner membrane. It carries out the reaction di-trans,octa-cis-undecaprenyl diphospho-N-acetyl-alpha-D-muramoyl-L-alanyl-D-glutamyl-meso-2,6-diaminopimeloyl-D-alanyl-D-alanine + UDP-N-acetyl-alpha-D-glucosamine = di-trans,octa-cis-undecaprenyl diphospho-[N-acetyl-alpha-D-glucosaminyl-(1-&gt;4)]-N-acetyl-alpha-D-muramoyl-L-alanyl-D-glutamyl-meso-2,6-diaminopimeloyl-D-alanyl-D-alanine + UDP + H(+). It participates in cell wall biogenesis; peptidoglycan biosynthesis. In terms of biological role, cell wall formation. Catalyzes the transfer of a GlcNAc subunit on undecaprenyl-pyrophosphoryl-MurNAc-pentapeptide (lipid intermediate I) to form undecaprenyl-pyrophosphoryl-MurNAc-(pentapeptide)GlcNAc (lipid intermediate II). This Anaeromyxobacter sp. (strain K) protein is UDP-N-acetylglucosamine--N-acetylmuramyl-(pentapeptide) pyrophosphoryl-undecaprenol N-acetylglucosamine transferase.